The primary structure comprises 762 residues: Cellulose synthase-like protein H2 (762 aa).

Low complexity predominate over residues 1–15 (MAVVAAAAATGSTTR). The segment at 1–39 (MAVVAAAAATGSTTRSGGGGGEGTRSGRKKPPPPPLQER) is disordered. 2 consecutive transmembrane segments (helical) span residues 47–67 (AWAWRLAGLAVLLLLLALLAL) and 81–101 (GVWRVALVCEAWFAALCALNV). Active-site residues include D180 and D470. A run of 6 helical transmembrane segments spans residues 541–561 (LAYLIVLGWPLRAPFELCYGL), 582–602 (FSVPLALFISYNTYNFMEYMA), 619–639 (IISVSAWTLAFLTVLLKSLGL), 673–693 (LPVFIPVTALAMLNIVAVTVG), 708–728 (APGIGEFMCCGWLVLCFFPFV), and 739–759 (GIPWSVKLKASLLVAMFVTFC).

This sequence belongs to the glycosyltransferase 2 family. Plant cellulose synthase-like H subfamily.

It localises to the golgi apparatus membrane. Thought to be a Golgi-localized beta-glycan synthase that polymerize the backbones of noncellulosic polysaccharides (hemicelluloses) of plant cell wall. This is Cellulose synthase-like protein H2 (CSLH2) from Oryza sativa subsp. indica (Rice).